We begin with the raw amino-acid sequence, 641 residues long: Fibrinogen alpha-2 chain (641 aa).

The N-terminal stretch at 1–23 (MTLRGVSMVLTWCLLVSKAWSSG) is a signal peptide. A coiled-coil region spans residues 107-226 (SVSDVSNQVV…IVHESFSVER (120 aa)). Residues 228–327 (DARSLHPYSG…QKTEELSFKK (100 aa)) are disordered. Asn271 carries N-linked (GlcNAc...) asparagine glycosylation. Over residues 279–289 (VDERSKVEKDV) the composition is skewed to basic and acidic residues. The span at 293-317 (STSSVSSSSSSSSSSSSTSSTISST) shows a compositional bias: low complexity. One can recognise a Fibrinogen C-terminal domain in the interval 395–636 (RTNLSEYIDC…RTAVRFRRVQ (242 aa)). A glycan (N-linked (GlcNAc...) asparagine) is linked at Asn397. Residues Cys404 and Cys435 are joined by a disulfide bond. Residue Asn458 is glycosylated (N-linked (GlcNAc...) asparagine). A disulfide bridge connects residues Cys571 and Cys584.

In terms of assembly, heterohexamer; disulfide linked. Contains 2 sets of 3 non-identical chains (alpha, beta and gamma). The 2 heterotrimers are in head to head conformation with the N-termini in a small central domain. Conversion of fibrinogen to fibrin is triggered by thrombin, which cleaves fibrinopeptides A and B from alpha and beta chains, and thus exposes the N-terminal polymerization sites responsible for the formation of the soft clot. The soft clot is converted into the hard clot by factor XIIIA which catalyzes the epsilon-(gamma-glutamyl)lysine cross-linking between gamma chains (stronger) and between alpha chains (weaker) of different monomers. In terms of processing, forms F13A-mediated cross-links between a glutamine and the epsilon-amino group of a lysine residue, forming fibronectin-fibrinogen heteropolymers.

It localises to the secreted. Fibrinogen has a double function: yielding monomers that polymerize into fibrin and acting as a cofactor in platelet aggregation. The sequence is that of Fibrinogen alpha-2 chain from Petromyzon marinus (Sea lamprey).